Here is a 330-residue protein sequence, read N- to C-terminus: MDKTATLCLLFLFTFLTTCLSKDLCNQNDKNTLLKIKKSLNNPYHLASWDPQTDCCSWYCLECGDATVNHRVTALTIFSGQISGQIPAEVGDLPYLETLVFRKLSNLTGTIQPTIAKLKNLRMLRLSWTNLTGPIPDFISQLKNLEFLELSFNDLSGSIPSSLSTLPKILALELSRNKLTGSIPESFGSFPGTVPDLRLSHNQLSGPIPKSLGNIDFNRIDLSRNKLQGDASMLFGSNKTTWSIDLSRNMFQFDISKVDIPKTLGILDLNHNGITGNIPVQWTEAPLQFFNVSYNKLCGHIPTGGKLQTFDSYSYFHNKCLCGAPLEICK.

A signal peptide spans 1–21 (MDKTATLCLLFLFTFLTTCLS). 2 disulfides stabilise this stretch: C25/C55 and C56/C63. LRR repeat units lie at residues 69–93 (NHRVTALTIFSGQISGQIPAEVGDL), 94–117 (PYLETLVFRKLSNLTGTIQPTIAK), 118–142 (LKNLRMLRLSWTNLTGPIPDFISQL), 143–166 (KNLEFLELSFNDLSGSIPSSLSTL), 167–189 (PKILALELSRNKLTGSIPESFGS), 191–215 (PGTVPDLRLSHNQLSGPIPKSLGNI), 217–237 (FNRIDLSRNKLQGDASMLFGS), 238–260 (NKTTWSIDLSRNMFQFDISKVDI), 261–285 (PKTLGILDLNHNGITGNIPVQWTEA), and 287–309 (LQFFNVSYNKLCGHIPTGGKLQT). 2 N-linked (GlcNAc...) asparagine glycosylation sites follow: N106 and N130. Residue N238 is glycosylated (N-linked (GlcNAc...) asparagine). N291 is a glycosylation site (N-linked (GlcNAc...) asparagine). Intrachain disulfides connect C298/C320 and C322/C329.

This sequence belongs to the polygalacturonase-inhibiting protein family.

It is found in the secreted. The protein resides in the cell wall. Its subcellular location is the membrane. In terms of biological role, inhibitor of fungal polygalacturonase. It is an important factor for plant resistance to phytopathogenic fungi. This is Polygalacturonase inhibitor 1 (PGIP1) from Arabidopsis thaliana (Mouse-ear cress).